Consider the following 82-residue polypeptide: DNA-directed RNA polymerase subunit omega (82 aa).

It belongs to the RNA polymerase subunit omega family. As to quaternary structure, in cyanobacteria the RNAP catalytic core is composed of 2 alpha, 1 beta, 1 beta', 1 gamma and 1 omega subunit. When a sigma factor is associated with the core the holoenzyme is formed, which can initiate transcription.

It carries out the reaction RNA(n) + a ribonucleoside 5'-triphosphate = RNA(n+1) + diphosphate. Promotes RNA polymerase assembly. Latches the N- and C-terminal regions of the beta' subunit thereby facilitating its interaction with the beta and alpha subunits. The protein is DNA-directed RNA polymerase subunit omega of Synechococcus sp. (strain CC9902).